A 202-amino-acid chain; its full sequence is Protein-methionine-sulfoxide reductase heme-binding subunit MsrQ (202 aa).

The next 6 membrane-spanning stretches (helical) occupy residues 8-28 (YAWL…FLLW), 50-70 (LALI…WLGW), 76-96 (IRKA…GIYL), 114-134 (PFIT…LTSG), 148-168 (LLHR…WWGV), and 174-194 (GPLL…KTPA).

This sequence belongs to the MsrQ family. In terms of assembly, heterodimer of a catalytic subunit (MsrP) and a heme-binding subunit (MsrQ). FMN is required as a cofactor. Requires heme b as cofactor.

It is found in the cell membrane. Its function is as follows. Part of the MsrPQ system that repairs oxidized cell envelope proteins containing methionine sulfoxide residues (Met-O), using respiratory chain electrons. Thus protects these proteins from oxidative-stress damage caused by reactive species of oxygen and chlorine. MsrPQ is essential for the maintenance of envelope integrity under bleach stress, rescuing a wide series of structurally unrelated cell envelope proteins from methionine oxidation. MsrQ provides electrons for reduction to the reductase catalytic subunit MsrP, using the quinone pool of the respiratory chain. The sequence is that of Protein-methionine-sulfoxide reductase heme-binding subunit MsrQ from Deinococcus radiodurans (strain ATCC 13939 / DSM 20539 / JCM 16871 / CCUG 27074 / LMG 4051 / NBRC 15346 / NCIMB 9279 / VKM B-1422 / R1).